The sequence spans 130 residues: Glutamate-rich protein 4 (130 aa).

The span at 91–104 shows a compositional bias: acidic residues; that stretch reads EEEEESSKEEEEDQ. Positions 91 to 130 are disordered; the sequence is EEEEESSKEEEEDQEPQRKQEEEHLEACPAPHPPDFEMMI. Residues 105–116 are compositionally biased toward basic and acidic residues; it reads EPQRKQEEEHLE.

This is Glutamate-rich protein 4 (ERICH4) from Homo sapiens (Human).